A 2785-amino-acid chain; its full sequence is Testis-expressed protein 15 (2785 aa).

A compositionally biased stretch (low complexity) spans 262 to 274; the sequence is SSSFPSSLSNAFS. Disordered regions lie at residues 262-331, 596-620, 661-683, 904-924, 943-1064, 2276-2458, 2470-2511, and 2571-2601; these read SSSF…PSSD, EQRDDKNPNEAKEHNTDNINGSEKQ, NGKPAETASSESEAVEQRHAPND, TESTEPETNKEGNASGFGMCS, VQES…QGRI, NRQE…TNDK, DIDA…LVPD, and TQPIKSESPKKSMTDAPNPNTAPFGSYGNSA. A compositionally biased stretch (basic and acidic residues) spans 275 to 286; the sequence is DVRKQKHSEEQV. Residues 314–331 show a composition bias toward polar residues; it reads TCSNDSQGHFSQESPSSD. Residues 596–611 are compositionally biased toward basic and acidic residues; it reads EQRDDKNPNEAKEHNT. 2 stretches are compositionally biased toward polar residues: residues 962–989 and 1021–1031; these read HNTHVDQGSGKPNNDSLSTEPSNVTVMN and HASSSRGQNIA. Residues 1033-1042 are compositionally biased toward basic and acidic residues; sequence KDLREHETHE. 8 stretches are compositionally biased toward polar residues: residues 1049–1064, 2291–2314, 2327–2338, 2353–2387, 2394–2415, 2431–2454, 2491–2502, and 2585–2601; these read SHGSSDRFSSLSQGRI, DSSQPGVSEQTPPGTECTVKNISD, EVSQGKGNTDTV, NIQTVSKHPSTTGSPPNDENKIGSNSSDSLKSISA, RQSSVLGSVSPAESVQDTCTPK, ASLTEQQENSNVIEKRNGNSSVAE, DHTQISPSNLTA, and DAPNPNTAPFGSYGNSA.

The protein belongs to the TEX15 family. In terms of assembly, interacts with PIWIL4. Interacts with PIWIL2. Detected in testis and ovary, and at lower levels in lung and brain.

The protein resides in the cytoplasm. Its subcellular location is the nucleus. In terms of biological role, required during spermatogenesis for normal chromosome synapsis and meiotic recombination in germ cells. Necessary for formation of DMC1 and RAD51 foci on meiotic chromosomes, suggesting a specific role in DNA double-stranded break repair. Essential executor of PIWIL4-piRNA pathway directed transposon DNA methylation and silencing in the male embryonic germ cells. PIWIL4-piRNA binds to nascent transposon transcripts and interacts with TEX15, which may in turn recruit the epigenetic silencing machinery to the transposon loci. Not required for piRNA biosynthesis. The protein is Testis-expressed protein 15 of Mus musculus (Mouse).